The sequence spans 396 residues: Dimethyladenosine transferase 2, mitochondrial (396 aa).

The N-terminal 19 residues, 1-19 (MWIPVVGLPRRLRLSALAG), are a transit peptide targeting the mitochondrion. The disordered stretch occupies residues 44 to 64 (LSDSSPQLWPEPDFRNPPRKA). S-adenosyl-L-methionine is bound by residues valine 75, glutamate 124, and aspartate 150. Residues 330 to 331 (RR) are DNA-binding.

This sequence belongs to the class I-like SAM-binding methyltransferase superfamily. rRNA adenine N(6)-methyltransferase family. KsgA subfamily. Homodimer. Component of the mitochondrial transcription initiation complex, composed at least of TFB2M, TFAM and POLRMT. In this complex TFAM recruits POLRMT to the promoter whereas TFB2M induces structural changes in POLRMT to enable promoter opening and trapping of the DNA non-template strand. Interacts with mitochondrial RNA polymerase POLRMT. Interacts with TFAM. Ubiquitously expressed.

The protein resides in the mitochondrion. It catalyses the reaction adenosine in rRNA + S-adenosyl-L-methionine = N(6)-methyladenosine in rRNA + S-adenosyl-L-homocysteine + H(+). Its function is as follows. S-adenosyl-L-methionine-dependent rRNA methyltransferase which may methylate two specific adjacent adenosines in the loop of a conserved hairpin near the 3'-end of 12S mitochondrial rRNA. Component of the mitochondrial transcription initiation complex, composed at least of TFB2M, TFAM and POLRMT that is required for basal transcription of mitochondrial DNA. In this complex, TFAM recruits POLRMT to a specific promoter whereas TFB2M induces structural changes in POLRMT to enable promoter opening and trapping of the DNA non-template strand. Stimulates transcription independently of the methyltransferase activity. This Homo sapiens (Human) protein is Dimethyladenosine transferase 2, mitochondrial.